Consider the following 440-residue polypeptide: Endoplasmic reticulum junction formation protein lunapark (440 aa).

Residues methionine 1 to arginine 45 lie on the Cytoplasmic side of the membrane. A coiled-coil region spans residues glutamate 16–lysine 40. The chain crosses the membrane as a helical span at residues leucine 46 to leucine 66. Residues proline 67 to threonine 77 are Lumenal-facing. The chain crosses the membrane as a helical span at residues leucine 78–phenylalanine 98. At serine 99–glutamate 440 the chain is on the cytoplasmic side. Residues arginine 100–threonine 128 adopt a coiled-coil conformation. Positions leucine 149–arginine 169 are disordered. The residue at position 159 (threonine 159) is a Phosphothreonine. A phosphoserine mark is found at serine 177, serine 179, serine 188, and serine 192. Threonine 198 is subject to Phosphothreonine. Positions glutamine 202–proline 247 are disordered. Phosphoserine occurs at positions 206 and 215. The segment covering valine 216–leucine 225 has biased composition (polar residues). Threonine 219 carries the phosphothreonine modification. Phosphoserine is present on residues serine 222 and serine 231. The C4-type; plays a role in ER morphology zinc-finger motif lies at cysteine 280–cysteine 305. The disordered stretch occupies residues proline 316–glutamate 440. Phosphoserine is present on serine 325. Over residues aspartate 334–glutamine 343 the composition is skewed to polar residues. Composition is skewed to acidic residues over residues glutamine 370–glutamate 411 and glutamate 431–glutamate 440.

It belongs to the lunapark family. Homodimer; homodimerization requires the C4-type zinc finger motif and decreases during mitosis in a phosphorylation-dependent manner. Phosphorylated. Phosphorylation at Thr-159 and Ser-325 occurs during interphase. Phosphorylation at Ser-177, Ser-179, Ser-188, Ser-192, Thr-198, Ser-206, Ser-215, Thr-219, Ser-222 and Ser-231 occurs during mitosis; these phosphorylations reduce both its homodimerization and the ER three-way tubular junction formation.

The protein localises to the endoplasmic reticulum membrane. Functionally, endoplasmic reticulum (ER)-shaping membrane protein that plays a role in determining ER morphology. Involved in the stabilization of nascent three-way ER tubular junctions within the ER network. May also play a role as a curvature-stabilizing protein within three-way ER tubular junction network. In Xenopus laevis (African clawed frog), this protein is Endoplasmic reticulum junction formation protein lunapark (lnpk).